Here is a 526-residue protein sequence, read N- to C-terminus: Peptide chain release factor 3 (526 aa).

Residues 8 to 277 (NKRRTFAIIS…GLTQWAPAPQ (270 aa)) form the tr-type G domain. Residues 17–24 (SHPDAGKT), 85–89 (DTPGH), and 139–142 (NKLD) contribute to the GTP site.

Belongs to the TRAFAC class translation factor GTPase superfamily. Classic translation factor GTPase family. PrfC subfamily.

Its subcellular location is the cytoplasm. Increases the formation of ribosomal termination complexes and stimulates activities of RF-1 and RF-2. It binds guanine nucleotides and has strong preference for UGA stop codons. It may interact directly with the ribosome. The stimulation of RF-1 and RF-2 is significantly reduced by GTP and GDP, but not by GMP. The polypeptide is Peptide chain release factor 3 (Histophilus somni (strain 129Pt) (Haemophilus somnus)).